Here is a 549-residue protein sequence, read N- to C-terminus: CTP synthase (549 aa).

The interval 1-267 (MAKFVFITGG…CREVLDVLNL (267 aa)) is amidoligase domain. Position 13 (Ser13) interacts with CTP. Position 13 (Ser13) interacts with UTP. ATP is bound by residues 14–19 (SIGKGI) and Asp71. The Mg(2+) site is built by Asp71 and Glu141. CTP is bound by residues 148-150 (DIE), 188-193 (KTKPTQ), and Lys224. UTP-binding positions include 188 to 193 (KTKPTQ) and Lys224. The Glutamine amidotransferase type-1 domain occupies 292–534 (KIALVGKYVQ…IEAAQQRLPD (243 aa)). Residue Gly354 coordinates L-glutamine. Cys381 (nucleophile; for glutamine hydrolysis) is an active-site residue. L-glutamine contacts are provided by residues 382–385 (LGMQ), Glu405, and Arg462. Catalysis depends on residues His507 and Glu509.

Belongs to the CTP synthase family. Homotetramer.

The catalysed reaction is UTP + L-glutamine + ATP + H2O = CTP + L-glutamate + ADP + phosphate + 2 H(+). The enzyme catalyses L-glutamine + H2O = L-glutamate + NH4(+). It catalyses the reaction UTP + NH4(+) + ATP = CTP + ADP + phosphate + 2 H(+). It participates in pyrimidine metabolism; CTP biosynthesis via de novo pathway; CTP from UDP: step 2/2. With respect to regulation, allosterically activated by GTP, when glutamine is the substrate; GTP has no effect on the reaction when ammonia is the substrate. The allosteric effector GTP functions by stabilizing the protein conformation that binds the tetrahedral intermediate(s) formed during glutamine hydrolysis. Inhibited by the product CTP, via allosteric rather than competitive inhibition. Catalyzes the ATP-dependent amination of UTP to CTP with either L-glutamine or ammonia as the source of nitrogen. Regulates intracellular CTP levels through interactions with the four ribonucleotide triphosphates. The polypeptide is CTP synthase (Synechococcus sp. (strain CC9605)).